The primary structure comprises 337 residues: tRNA N(3)-cytidine methyltransferase METTL2 (337 aa).

Tryptophan 66, tyrosine 70, glycine 140, aspartate 165, aspartate 191, and isoleucine 212 together coordinate S-adenosyl-L-methionine.

It belongs to the methyltransferase superfamily. METL family. As to quaternary structure, monomer.

It is found in the cytoplasm. It carries out the reaction cytidine(32) in tRNA(Thr) + S-adenosyl-L-methionine = N(3)-methylcytidine(32) in tRNA(Thr) + S-adenosyl-L-homocysteine + H(+). The catalysed reaction is cytidine(32) in tRNA(Arg)(CCU) + S-adenosyl-L-methionine = N(3)-methylcytidine(32) in tRNA(Arg)(CCU) + S-adenosyl-L-homocysteine + H(+). Functionally, S-adenosyl-L-methionine-dependent methyltransferase that mediates N(3)-methylcytidine modification of residue 32 of the tRNA anticodon loop of tRNA(Thr)(UGU) and tRNA(Arg)(CCU). N(3)-methylcytidine methylation by mettl2 requires the N6-threonylcarbamoylation of tRNA (t6A37) by the EKC/KEOPS complex as prerequisite. The protein is tRNA N(3)-cytidine methyltransferase METTL2 (mettl2) of Xenopus tropicalis (Western clawed frog).